Here is a 131-residue protein sequence, read N- to C-terminus: Cuticle protein 79, isoform B (131 aa).

Tandem repeats lie at residues 37 to 40 (AAPA), 45 to 48 (AAPA), and 53 to 56 (AAPA).

Functionally, component of the cuticle of migratory locust which contains more than 100 different structural proteins. The chain is Cuticle protein 79, isoform B from Locusta migratoria (Migratory locust).